Reading from the N-terminus, the 60-residue chain is Large ribosomal subunit protein bL32 (60 aa).

Over residues 1–23 the composition is skewed to basic residues; that stretch reads MAKHPVPKKKTSKSKRDMRRSHH. Residues 1–26 form a disordered region; the sequence is MAKHPVPKKKTSKSKRDMRRSHHALV.

This sequence belongs to the bacterial ribosomal protein bL32 family.

The sequence is that of Large ribosomal subunit protein bL32 from Deinococcus geothermalis (strain DSM 11300 / CIP 105573 / AG-3a).